A 219-amino-acid chain; its full sequence is 7-methyl-GTP pyrophosphatase (219 aa).

Asp89 functions as the Proton acceptor in the catalytic mechanism.

This sequence belongs to the Maf family. YceF subfamily. A divalent metal cation serves as cofactor.

The protein resides in the cytoplasm. It catalyses the reaction N(7)-methyl-GTP + H2O = N(7)-methyl-GMP + diphosphate + H(+). Nucleoside triphosphate pyrophosphatase that hydrolyzes 7-methyl-GTP (m(7)GTP). May have a dual role in cell division arrest and in preventing the incorporation of modified nucleotides into cellular nucleic acids. The chain is 7-methyl-GTP pyrophosphatase from Polaromonas sp. (strain JS666 / ATCC BAA-500).